A 754-amino-acid chain; its full sequence is Pentatricopeptide repeat-containing protein At3g53700, chloroplastic (754 aa).

A chloroplast-targeting transit peptide spans 1–72; the sequence is MAFSSCLKFY…DSAALRLFNL (72 aa). PPR repeat units follow at residues 82-116, 117-152, 153-187, 188-222, 223-257, 258-288, 294-328, 329-363, 364-398, 399-433, 434-468, 469-503, 504-538, 539-573, 574-608, 609-643, and 645-680; these read EPAL…RCEM, GTST…GLKP, DTHF…GIKP, DVST…GLVP, DEKT…GCSW, SNVS…MSNQ, DQYT…GYDP, DVYT…DCSP, NTVT…GILP, DVCT…GCEP, DEFT…GCAR, SVIT…GVSR, NSVT…GQKP, DKYT…GCEP, DIVT…GINL, TPHA…NEAP, and DAVS…GFVP.

The protein belongs to the PPR family. P subfamily.

It localises to the plastid. The protein resides in the chloroplast. Functionally, may be involved in female gametophyte development. The polypeptide is Pentatricopeptide repeat-containing protein At3g53700, chloroplastic (MEE40) (Arabidopsis thaliana (Mouse-ear cress)).